Consider the following 345-residue polypeptide: RDS/peripherin-like protein xRDS35 (345 aa).

Topologically, residues 1–24 (MVLFKAKFSFQRRVKLAQTLWLLS) are cytoplasmic. The chain crosses the membrane as a helical span at residues 25–43 (WLSVLVGCLTFGMGIFLKV). The Lumenal segment spans residues 44–61 (QLWIHNEVMENTSAHAVP). A glycan (N-linked (GlcNAc...) asparagine) is linked at N54. Residues 62 to 80 (NTVITAGLVGILLGIYAGK) form a helical membrane-spanning segment. Residues 81-99 (VSQASMDVTKYQRWKSFMM) are Cytoplasmic-facing. Residues 100–123 (PFFFLAILSCLVCLAALVLSVALR) form a helical membrane-spanning segment. Over 124–264 (GTLEESLKIG…LSYYTGIMAT (141 aa)) the chain is Lumenal. N229 carries N-linked (GlcNAc...) asparagine glycosylation. A helical membrane pass occupies residues 265–290 (NGAAVTLSFLLQASVLVSLRYLHTSM). At 291–345 (DKISGPDDMEADTEGFILEKGVTETMNTTLEKMKGLFMSNQVETAEGGGEAAAAS) the chain is on the cytoplasmic side.

The protein belongs to the PRPH2/ROM1 family. As to quaternary structure, homodimer; disulfide-linked. Rod specific.

It is found in the membrane. This is RDS/peripherin-like protein xRDS35 (rds35) from Xenopus laevis (African clawed frog).